A 211-amino-acid polypeptide reads, in one-letter code: ATP phosphoribosyltransferase (211 aa).

Belongs to the ATP phosphoribosyltransferase family. Short subfamily. Heteromultimer composed of HisG and HisZ subunits.

It localises to the cytoplasm. It catalyses the reaction 1-(5-phospho-beta-D-ribosyl)-ATP + diphosphate = 5-phospho-alpha-D-ribose 1-diphosphate + ATP. The protein operates within amino-acid biosynthesis; L-histidine biosynthesis; L-histidine from 5-phospho-alpha-D-ribose 1-diphosphate: step 1/9. Catalyzes the condensation of ATP and 5-phosphoribose 1-diphosphate to form N'-(5'-phosphoribosyl)-ATP (PR-ATP). Has a crucial role in the pathway because the rate of histidine biosynthesis seems to be controlled primarily by regulation of HisG enzymatic activity. This Pseudomonas fluorescens (strain ATCC BAA-477 / NRRL B-23932 / Pf-5) protein is ATP phosphoribosyltransferase.